A 331-amino-acid chain; its full sequence is Ketol-acid reductoisomerase (NADP(+)) (331 aa).

The KARI N-terminal Rossmann domain maps to alanine 2–threonine 182. NADP(+)-binding positions include tyrosine 25–glutamine 28, serine 51, serine 53, and aspartate 83–glutamine 86. Histidine 108 is a catalytic residue. Residue glycine 134 coordinates NADP(+). The KARI C-terminal knotted domain occupies serine 183–leucine 328. Aspartate 191, glutamate 195, glutamate 227, and glutamate 231 together coordinate Mg(2+). Substrate is bound at residue serine 252.

It belongs to the ketol-acid reductoisomerase family. Mg(2+) serves as cofactor.

It carries out the reaction (2R)-2,3-dihydroxy-3-methylbutanoate + NADP(+) = (2S)-2-acetolactate + NADPH + H(+). The enzyme catalyses (2R,3R)-2,3-dihydroxy-3-methylpentanoate + NADP(+) = (S)-2-ethyl-2-hydroxy-3-oxobutanoate + NADPH + H(+). Its pathway is amino-acid biosynthesis; L-isoleucine biosynthesis; L-isoleucine from 2-oxobutanoate: step 2/4. It participates in amino-acid biosynthesis; L-valine biosynthesis; L-valine from pyruvate: step 2/4. In terms of biological role, involved in the biosynthesis of branched-chain amino acids (BCAA). Catalyzes an alkyl-migration followed by a ketol-acid reduction of (S)-2-acetolactate (S2AL) to yield (R)-2,3-dihydroxy-isovalerate. In the isomerase reaction, S2AL is rearranged via a Mg-dependent methyl migration to produce 3-hydroxy-3-methyl-2-ketobutyrate (HMKB). In the reductase reaction, this 2-ketoacid undergoes a metal-dependent reduction by NADPH to yield (R)-2,3-dihydroxy-isovalerate. The chain is Ketol-acid reductoisomerase (NADP(+)) from Crocosphaera subtropica (strain ATCC 51142 / BH68) (Cyanothece sp. (strain ATCC 51142)).